Consider the following 827-residue polypeptide: Leucine--tRNA ligase (827 aa).

The 'HIGH' region motif lies at 42-52; the sequence is PYPSGNLHMGH. The 'KMSKS' region signature appears at 583–587; sequence KMSKS. Lys-586 serves as a coordination point for ATP.

Belongs to the class-I aminoacyl-tRNA synthetase family.

It is found in the cytoplasm. The enzyme catalyses tRNA(Leu) + L-leucine + ATP = L-leucyl-tRNA(Leu) + AMP + diphosphate. The polypeptide is Leucine--tRNA ligase (Desulfitobacterium hafniense (strain DSM 10664 / DCB-2)).